The following is a 639-amino-acid chain: DNA gyrase subunit B (639 aa).

The segment covering glutamine 392 to alanine 402 has biased composition (basic and acidic residues). The interval glutamine 392–serine 417 is disordered. The region spanning serine 423 to proline 537 is the Toprim domain. Residues glutamate 429, aspartate 502, and aspartate 504 each coordinate Mg(2+).

Belongs to the type II topoisomerase GyrB family. In terms of assembly, heterotetramer, composed of two GyrA and two GyrB chains. In the heterotetramer, GyrA contains the active site tyrosine that forms a transient covalent intermediate with DNA, while GyrB binds cofactors and catalyzes ATP hydrolysis. Mg(2+) is required as a cofactor. Mn(2+) serves as cofactor. The cofactor is Ca(2+).

The protein resides in the cytoplasm. It catalyses the reaction ATP-dependent breakage, passage and rejoining of double-stranded DNA.. In terms of biological role, a type II topoisomerase that negatively supercoils closed circular double-stranded (ds) DNA in an ATP-dependent manner to modulate DNA topology and maintain chromosomes in an underwound state. Negative supercoiling favors strand separation, and DNA replication, transcription, recombination and repair, all of which involve strand separation. Also able to catalyze the interconversion of other topological isomers of dsDNA rings, including catenanes and knotted rings. Type II topoisomerases break and join 2 DNA strands simultaneously in an ATP-dependent manner. This chain is DNA gyrase subunit B, found in Haloferax lucentense (strain DSM 14919 / JCM 9276 / NCIMB 13854 / Aa 2.2) (Haloferax alicantei).